Reading from the N-terminus, the 147-residue chain is Myoglobin (147 aa).

The Globin domain maps to 2-141 (ADFDAVLKCW…IIADLEANYK (140 aa)). Position 60 (histidine 60) interacts with nitrite. Residue histidine 60 participates in O2 binding. Histidine 89 contributes to the heme b binding site.

Belongs to the globin family. In terms of assembly, monomeric.

It is found in the cytoplasm. The protein localises to the sarcoplasm. The catalysed reaction is Fe(III)-heme b-[protein] + nitric oxide + H2O = Fe(II)-heme b-[protein] + nitrite + 2 H(+). It catalyses the reaction H2O2 + AH2 = A + 2 H2O. In terms of biological role, monomeric heme protein which primary function is to store oxygen and facilitate its diffusion within muscle tissues. Reversibly binds oxygen through a pentacoordinated heme iron and enables its timely and efficient release as needed during periods of heightened demand. Depending on the oxidative conditions of tissues and cells, and in addition to its ability to bind oxygen, it also has a nitrite reductase activity whereby it regulates the production of bioactive nitric oxide. Under stress conditions, like hypoxia and anoxia, it also protects cells against reactive oxygen species thanks to its pseudoperoxidase activity. The polypeptide is Myoglobin (mb) (Thunnus alalunga (Albacore)).